The primary structure comprises 179 residues: Peptide deformylase (179 aa).

Cys102 and His144 together coordinate Fe cation. Residue Glu145 is part of the active site. His148 contacts Fe cation.

The protein belongs to the polypeptide deformylase family. Fe(2+) is required as a cofactor.

The catalysed reaction is N-terminal N-formyl-L-methionyl-[peptide] + H2O = N-terminal L-methionyl-[peptide] + formate. Its function is as follows. Removes the formyl group from the N-terminal Met of newly synthesized proteins. Requires at least a dipeptide for an efficient rate of reaction. N-terminal L-methionine is a prerequisite for activity but the enzyme has broad specificity at other positions. In Wolbachia sp. subsp. Brugia malayi (strain TRS), this protein is Peptide deformylase.